The primary structure comprises 235 residues: Large ribosomal subunit protein uL1 (235 aa).

This sequence belongs to the universal ribosomal protein uL1 family. As to quaternary structure, part of the 50S ribosomal subunit.

Functionally, binds directly to 23S rRNA. The L1 stalk is quite mobile in the ribosome, and is involved in E site tRNA release. Protein L1 is also a translational repressor protein, it controls the translation of the L11 operon by binding to its mRNA. The sequence is that of Large ribosomal subunit protein uL1 from Prochlorococcus marinus (strain AS9601).